Here is a 342-residue protein sequence, read N- to C-terminus: tRNA N6-adenosine threonylcarbamoyltransferase (342 aa).

The Fe cation site is built by His-114 and His-118. Residues 136 to 140, Asp-169, Gly-182, Asp-186, and Asn-275 contribute to the substrate site; that span reads LVSGG. Asp-301 is a Fe cation binding site.

This sequence belongs to the KAE1 / TsaD family. It depends on Fe(2+) as a cofactor.

It is found in the cytoplasm. It catalyses the reaction L-threonylcarbamoyladenylate + adenosine(37) in tRNA = N(6)-L-threonylcarbamoyladenosine(37) in tRNA + AMP + H(+). Functionally, required for the formation of a threonylcarbamoyl group on adenosine at position 37 (t(6)A37) in tRNAs that read codons beginning with adenine. Is involved in the transfer of the threonylcarbamoyl moiety of threonylcarbamoyl-AMP (TC-AMP) to the N6 group of A37, together with TsaE and TsaB. TsaD likely plays a direct catalytic role in this reaction. In Streptococcus pyogenes serotype M4 (strain MGAS10750), this protein is tRNA N6-adenosine threonylcarbamoyltransferase.